The sequence spans 381 residues: Cobalt-precorrin-5B C(1)-methyltransferase (381 aa).

It belongs to the CbiD family.

The enzyme catalyses Co-precorrin-5B + S-adenosyl-L-methionine = Co-precorrin-6A + S-adenosyl-L-homocysteine. The protein operates within cofactor biosynthesis; adenosylcobalamin biosynthesis; cob(II)yrinate a,c-diamide from sirohydrochlorin (anaerobic route): step 6/10. Catalyzes the methylation of C-1 in cobalt-precorrin-5B to form cobalt-precorrin-6A. This Prochlorococcus marinus (strain NATL1A) protein is Cobalt-precorrin-5B C(1)-methyltransferase.